Consider the following 436-residue polypeptide: Hydrolyase ccsE (436 aa).

The active-site Nucleophile is the serine 249.

It belongs to the AB hydrolase superfamily. FUS2 hydrolase family. In terms of assembly, homodimer.

The protein operates within mycotoxin biosynthesis. Hydrolyase; part of the gene cluster that mediates the biosynthesis of a family of the mycotoxins cytochalasins E and K. The hybrid PKS-NRPS synthetase ccsA and the enoyl reductase ccsC are responsible for fusion of phenylalanine with an octaketide backbone and subsequent release of the stable tetramic acid precursor. The polyketide synthase module (PKS) of the PKS-NRPS ccsA is responsible for the synthesis of the octaketide backbone. The downstream nonribosomal peptide synthetase (NRPS) amidates the carboxyl end of the octaketide with a phenylalanine. A reductase-like domain (R) at the C-terminus catalyzes the reductive release of the polyketide-amino acid intermediate. Because ccsA lacks a designated enoylreductase (ER) domain, the required activity is provided the enoyl reductase ccsC. Upon formation of the 11-membered carbocycle-fused perhydroisoindolone intermediate, a number of oxidative steps are required to afford the final cytochalasin E and K, including two hydroxylations at C17 and C18, one alcohol oxidation at C17, one epoxidation at C6 and C7 and two Baeyer-Villiger oxidations. The oxidative modification at C17, C18 and the C6-C7 epoxidation are likely to be catalyzed by the two cytochrome P450 oxygenases ccsD and ccsG. CcsD may be responsible for the epoxidation of the C6-C7 double bond. CcsG may be responsible for the successive oxidative modifications at C17 and C18. The double Baeyer-Villiger oxidations of ketocytochalasin to precytochalasin and cytochalasin Z(16) are among the final steps leading to cytochalasin E and K and are catalyzed by ccsB. The first oxygen insertion step follows that of the classic BVMO mechanism, generating the ester precytochalasin. Release of precytochalasin into an aqueous environment can generate the shunt product iso-precytochalasin through spontaneous isomerization. Alternatively, precytochalasin can undergo further oxidation by ccsB to yield the in-line carbonate-containing cytochalasin Z(16). Cytochalasin Z(16) is a precursor to cytochalasin E and cytochalasin K, whereas iso-precytochalasin is a precursor to cytochalasin Z(17) and rosellichalasin. The hydrolyase ccsE may catalyze hydrolysis of epoxide bond in cytochalasin E to afford cytochalasin K. The function of ccsF has not been assigned but it may play a role in post-PKS-NRPS biosynthetic step, resistance or transport of cytochalasins and related PKS-NRPS products. The polypeptide is Hydrolyase ccsE (Aspergillus clavatus (strain ATCC 1007 / CBS 513.65 / DSM 816 / NCTC 3887 / NRRL 1 / QM 1276 / 107)).